Consider the following 198-residue polypeptide: Na(+)-translocating NADH-quinone reductase subunit E (198 aa).

Helical transmembrane passes span Ser-11–Val-31, Val-35–Ala-55, Phe-77–Ile-97, Gly-110–Val-130, Val-140–Ile-160, and Leu-176–Ile-196.

Belongs to the NqrDE/RnfAE family. In terms of assembly, composed of six subunits; NqrA, NqrB, NqrC, NqrD, NqrE and NqrF.

The protein localises to the cell inner membrane. The enzyme catalyses a ubiquinone + n Na(+)(in) + NADH + H(+) = a ubiquinol + n Na(+)(out) + NAD(+). Functionally, NQR complex catalyzes the reduction of ubiquinone-1 to ubiquinol by two successive reactions, coupled with the transport of Na(+) ions from the cytoplasm to the periplasm. NqrA to NqrE are probably involved in the second step, the conversion of ubisemiquinone to ubiquinol. This Glaesserella parasuis serovar 5 (strain SH0165) (Haemophilus parasuis) protein is Na(+)-translocating NADH-quinone reductase subunit E.